Consider the following 382-residue polypeptide: Flap endonuclease 1 (382 aa).

Residues 1 to 104 (MGIKGLSQVI…GELEKRTERR (104 aa)) are N-domain. D34 contacts Mg(2+). Residues R47 and R70 each coordinate DNA. The Mg(2+) site is built by D86, E158, E160, D179, and D181. The segment at 122–253 (EAEKFERRLV…KKAVELIKQH (132 aa)) is I-domain. DNA is bound at residue E158. DNA contacts are provided by G231 and D233. D233 is a binding site for Mg(2+). Positions 336 to 344 (TQGRIDSFF) are interaction with PCNA. Residues 359–368 (KAQEEAEKMK) are compositionally biased toward basic and acidic residues. The segment at 359–382 (KAQEEAEKMKKGGKKSGPPKKKAK) is disordered. Residues 369-382 (KGGKKSGPPKKKAK) show a composition bias toward basic residues.

Belongs to the XPG/RAD2 endonuclease family. FEN1 subfamily. Interacts with PCNA. Three molecules of crn-1 bind to one PCNA trimer with each molecule binding to one PCNA monomer. PCNA stimulates the nuclease activity without altering cleavage specificity. Mg(2+) serves as cofactor. Phosphorylated. Phosphorylation upon DNA damage induces relocalization to the nuclear plasma.

It localises to the nucleus. The protein localises to the nucleolus. Its subcellular location is the nucleoplasm. The protein resides in the mitochondrion. Structure-specific nuclease with 5'-flap endonuclease and 5'-3' exonuclease activities involved in DNA replication and repair. During DNA replication, cleaves the 5'-overhanging flap structure that is generated by displacement synthesis when DNA polymerase encounters the 5'-end of a downstream Okazaki fragment. It enters the flap from the 5'-end and then tracks to cleave the flap base, leaving a nick for ligation. Also involved in the long patch base excision repair (LP-BER) pathway, by cleaving within the apurinic/apyrimidinic (AP) site-terminated flap. Acts as a genome stabilization factor that prevents flaps from equilibrating into structures that lead to duplications and deletions. Also possesses 5'-3' exonuclease activity on nicked or gapped double-stranded DNA, and exhibits RNase H activity. Also involved in replication and repair of rDNA and in repairing mitochondrial DNA. This Caenorhabditis briggsae protein is Flap endonuclease 1.